The chain runs to 330 residues: ADP-L-glycero-D-manno-heptose-6-epimerase (330 aa).

NADP(+) is bound by residues 11–12 (FI), 32–33 (DN), K39, K54, 75–79 (EGACS), and N92. The active-site Proton acceptor is Y139. K143 lines the NADP(+) pocket. N168 contributes to the substrate binding site. Positions 169 and 177 each coordinate NADP(+). Residue K177 is the Proton acceptor of the active site. Residues R179, H186, 200–203 (FGEY), R213, and Y292 each bind substrate.

This sequence belongs to the NAD(P)-dependent epimerase/dehydratase family. HldD subfamily. As to quaternary structure, homopentamer. NADP(+) is required as a cofactor.

It carries out the reaction ADP-D-glycero-beta-D-manno-heptose = ADP-L-glycero-beta-D-manno-heptose. The protein operates within nucleotide-sugar biosynthesis; ADP-L-glycero-beta-D-manno-heptose biosynthesis; ADP-L-glycero-beta-D-manno-heptose from D-glycero-beta-D-manno-heptose 7-phosphate: step 4/4. Its function is as follows. Catalyzes the interconversion between ADP-D-glycero-beta-D-manno-heptose and ADP-L-glycero-beta-D-manno-heptose via an epimerization at carbon 6 of the heptose. This is ADP-L-glycero-D-manno-heptose-6-epimerase from Burkholderia thailandensis (strain ATCC 700388 / DSM 13276 / CCUG 48851 / CIP 106301 / E264).